A 141-amino-acid polypeptide reads, in one-letter code: Large ribosomal subunit protein uL11 (141 aa).

This sequence belongs to the universal ribosomal protein uL11 family. Part of the ribosomal stalk of the 50S ribosomal subunit. Interacts with L10 and the large rRNA to form the base of the stalk. L10 forms an elongated spine to which L12 dimers bind in a sequential fashion forming a multimeric L10(L12)X complex. One or more lysine residues are methylated.

In terms of biological role, forms part of the ribosomal stalk which helps the ribosome interact with GTP-bound translation factors. This is Large ribosomal subunit protein uL11 from Streptococcus pneumoniae serotype 2 (strain D39 / NCTC 7466).